We begin with the raw amino-acid sequence, 316 residues long: MNQLDGIKQFTTVVADSGDIESIRHYQPQDATTNPSLLLKAAGLEQYGHLIEDAIAWGKKHGGTQEQQVAAASDKLAVNFGAEILKSIPGRVSTEVDARLSFDKEKSIEKARHLVGLYQQQGIDKSRILIKLAATWEGIRAAGQLEKEGINCNLTLLFSFAQARACAEAGVYLISPFVGRIYDWYQARSPLEPYVVEEDPGVKSVRNIYDYFKQHRYETIVMGASFRRTEQILALTGCDRLTISPNLLKELKEKEEPVIRKLVPSSQMFHRPTSMTEAEFRWEHNQDAMAVEKLSEGIRLFAVDQRKLEDLLAAKL.

Lys-131 acts as the Schiff-base intermediate with substrate in catalysis.

Belongs to the transaldolase family. Type 1 subfamily. As to quaternary structure, homodimer.

It localises to the cytoplasm. It catalyses the reaction D-sedoheptulose 7-phosphate + D-glyceraldehyde 3-phosphate = D-erythrose 4-phosphate + beta-D-fructose 6-phosphate. It functions in the pathway carbohydrate degradation; pentose phosphate pathway; D-glyceraldehyde 3-phosphate and beta-D-fructose 6-phosphate from D-ribose 5-phosphate and D-xylulose 5-phosphate (non-oxidative stage): step 2/3. In terms of biological role, transaldolase is important for the balance of metabolites in the pentose-phosphate pathway. This chain is Transaldolase 2, found in Salmonella paratyphi A (strain ATCC 9150 / SARB42).